The sequence spans 985 residues: Phosphoenolpyruvate carboxylase (985 aa).

Residues M1 to R17 are compositionally biased toward low complexity. The disordered stretch occupies residues M1–D55. Active-site residues include H193 and K634.

The protein belongs to the PEPCase type 1 family. Mg(2+) serves as cofactor.

The enzyme catalyses oxaloacetate + phosphate = phosphoenolpyruvate + hydrogencarbonate. Forms oxaloacetate, a four-carbon dicarboxylic acid source for the tricarboxylic acid cycle. The protein is Phosphoenolpyruvate carboxylase of Ralstonia nicotianae (strain ATCC BAA-1114 / GMI1000) (Ralstonia solanacearum).